The sequence spans 67 residues: Large ribosomal subunit protein eL38 (67 aa).

It belongs to the eukaryotic ribosomal protein eL38 family.

The polypeptide is Large ribosomal subunit protein eL38 (rpl38e) (Aeropyrum pernix (strain ATCC 700893 / DSM 11879 / JCM 9820 / NBRC 100138 / K1)).